Here is a 492-residue protein sequence, read N- to C-terminus: V-type proton ATPase subunit B 2 (492 aa).

It belongs to the ATPase alpha/beta chains family. V-ATPase is a heteromultimeric enzyme composed of a peripheral catalytic V1 complex (main components: subunits A, B, C, D, E, and F) attached to an integral membrane V0 proton pore complex (main component: the proteolipid protein).

In terms of biological role, non-catalytic subunit of the peripheral V1 complex of vacuolar ATPase. V-ATPase is responsible for acidifying a variety of intracellular compartments in eukaryotic cells. The chain is V-type proton ATPase subunit B 2 from Acetabularia acetabulum (Mermaid's wine glass).